Reading from the N-terminus, the 413-residue chain is Transcription factor bHLH23 (413 aa).

The tract at residues 40–75 is disordered; that stretch reads SSQTQTPSCDPPLILRGSGSGDGEGNGPLPQPPPPL. Threonine 186 carries the phosphothreonine modification. Position 191 is a phosphoserine (serine 191). Disordered regions lie at residues 232–278 and 391–413; these read TEPV…RSRA and ETEQ…KMFS. Positions 246-257 are enriched in basic and acidic residues; sequence TDERKRKTREET. One can recognise a bHLH domain in the interval 277–326; the sequence is RAAIMHKLSERRRRQKINEMMKALQELLPRCTKTDRSSMLDDVIEYVKSL.

As to quaternary structure, homodimer. In terms of tissue distribution, expressed constitutively in leaves, stems, and flowers.

It localises to the nucleus. This Arabidopsis thaliana (Mouse-ear cress) protein is Transcription factor bHLH23 (BHLH23).